Here is a 335-residue protein sequence, read N- to C-terminus: MKSTSKIYTDKDSNLDVIKGKRIAVLGYGSQGRAWAQNLRDSGLNVVVGLEREGKSWELAKSDGIIPLHTKDAVKDADIIIFLVPDMVQRTLWLESVQPYMKKGADLVFAHGFNIHYKLIEPPKDSDVYMIAPKGPGPTVREYYKAGGGVPALVAIQQDVSGTALQKALAIAKGIGATRAGVIPTTFKEETETDLFGEQVILVGGIMELMKAAFETLVEEGYQPEVAYFETINELKMLVDLVYEKGITGMLKAVSDTAKYGGMTVGKFVINEDVRKRMKEALQRIKSGKFAEEWVEEYGRGMPTVVNGLSQVQNSLEEKIGNQLKDLIQKGKPKS.

The region spanning 5-185 (SKIYTDKDSN…GATRAGVIPT (181 aa)) is the KARI N-terminal Rossmann domain. Residues 28 to 31 (YGSQ), serine 56, and 86 to 89 (DMVQ) contribute to the NADP(+) site. Residue histidine 111 is part of the active site. An NADP(+)-binding site is contributed by glycine 137. In terms of domain architecture, KARI C-terminal knotted spans 186–331 (TFKEETETDL…NQLKDLIQKG (146 aa)). Mg(2+)-binding residues include aspartate 194, glutamate 198, glutamate 230, and glutamate 234. Serine 255 serves as a coordination point for substrate.

This sequence belongs to the ketol-acid reductoisomerase family. Requires Mg(2+) as cofactor.

It carries out the reaction (2R)-2,3-dihydroxy-3-methylbutanoate + NADP(+) = (2S)-2-acetolactate + NADPH + H(+). The catalysed reaction is (2R,3R)-2,3-dihydroxy-3-methylpentanoate + NADP(+) = (S)-2-ethyl-2-hydroxy-3-oxobutanoate + NADPH + H(+). It functions in the pathway amino-acid biosynthesis; L-isoleucine biosynthesis; L-isoleucine from 2-oxobutanoate: step 2/4. The protein operates within amino-acid biosynthesis; L-valine biosynthesis; L-valine from pyruvate: step 2/4. Its function is as follows. Involved in the biosynthesis of branched-chain amino acids (BCAA). Catalyzes an alkyl-migration followed by a ketol-acid reduction of (S)-2-acetolactate (S2AL) to yield (R)-2,3-dihydroxy-isovalerate. In the isomerase reaction, S2AL is rearranged via a Mg-dependent methyl migration to produce 3-hydroxy-3-methyl-2-ketobutyrate (HMKB). In the reductase reaction, this 2-ketoacid undergoes a metal-dependent reduction by NADPH to yield (R)-2,3-dihydroxy-isovalerate. The polypeptide is Ketol-acid reductoisomerase (NADP(+)) (Saccharolobus islandicus (strain M.16.27) (Sulfolobus islandicus)).